Here is a 622-residue protein sequence, read N- to C-terminus: Low affinity potassium transport system protein Kup (622 aa).

A run of 12 helical transmembrane segments spans residues 9-29 (LPAL…TSPL), 49-69 (VFGF…IKYI), 101-121 (VLVI…VITP), 137-157 (PQLD…LFVI), 163-183 (GMVG…LAVL), 213-233 (VSFI…ALYA), 247-267 (WFSV…ALLL), 276-296 (PFFL…ATLA), 337-357 (IYIP…IVSF), 363-383 (LAAA…ILSA), 395-415 (LFVG…FSAN), and 419-439 (IVSG…VMTT).

This sequence belongs to the HAK/KUP transporter (TC 2.A.72) family.

It localises to the cell inner membrane. The enzyme catalyses K(+)(in) + H(+)(in) = K(+)(out) + H(+)(out). In terms of biological role, responsible for the low-affinity transport of potassium into the cell. Likely operates as a K(+):H(+) symporter. The chain is Low affinity potassium transport system protein Kup from Klebsiella pneumoniae subsp. pneumoniae (strain ATCC 700721 / MGH 78578).